Consider the following 518-residue polypeptide: Vesicular inhibitory amino acid transporter (518 aa).

The Cytoplasmic segment spans residues 1-125 (MATLIRSKLS…WNVTNAIQGM (125 aa)). Residues 126 to 146 (FVLGLPYAILHGGYLGLFLII) traverse the membrane as a helical segment. Over 147-197 (FAAVVCCYTGKILIACLYEENEDGETVRVRDSYVDIANACCAPRFPKLGGR) the chain is Lumenal, vesicle. The chain crosses the membrane as a helical span at residues 198–218 (VVNVAQIIELVMTCILYVVVS). Residues 219-258 (GNLMYNSFPNLPISQKSWSIMATAVLLPCAFLKNLKAVSK) lie on the Cytoplasmic side of the membrane. A helical transmembrane segment spans residues 259 to 279 (FSLLCTVAHFVINILVIAYCL). At 280–298 (SRARDWAWDKVKFYIDVKK) the chain is on the lumenal, vesicle side. Residues 299–319 (FPISIGIIVFSYTSQIFLPSL) form a helical membrane-spanning segment. Over 320-334 (EGNMQSPREFHCMMN) the chain is Cytoplasmic. Residues 335 to 355 (WTHIAACILKGLFALVAYLTW) traverse the membrane as a helical segment. Topologically, residues 356–376 (ADETKEVITDNLPSTIRAVVN) are lumenal, vesicle. A helical membrane pass occupies residues 377 to 397 (LFLVSKALLSYPLPFFAAVEV). Topologically, residues 398 to 431 (LEKSLFQEGARAFFPNCYGGDGRLKSWGLTLRCA) are cytoplasmic. The helical transmembrane segment at 432 to 452 (LVVFTLLMAIYVPHFALLMGL) threads the bilayer. The Lumenal, vesicle portion of the chain corresponds to 453-454 (TG). Residues 455-475 (SLTGAGLCFLLPSLFHLKLMW) form a helical membrane-spanning segment. The Cytoplasmic portion of the chain corresponds to 476-482 (RQLLWHQ). Residues 483–503 (VFFDVSIFVIGSICSVSGFVH) form a helical membrane-spanning segment. Topologically, residues 504–518 (SLEGLIEAYAYNIED) are lumenal, vesicle.

The protein belongs to the amino acid/polyamine transporter 2 family. Initially expressed in late neurula stages in the anterior spinal cord. By early tailbud stages, expression extends posteriorly along the entire developing spinal cord and appears in the hindbrain. In late tailbud embryos, expressed in the forebrain, midbrain, hindbrain, spinal cord and retina. In swimming tadpoles, expressed in an extended and more intense pattern including interneurons.

It localises to the cytoplasmic vesicle membrane. The protein resides in the presynapse. The catalysed reaction is 4-aminobutanoate(out) + n H(+)(in) = 4-aminobutanoate(in) + n H(+)(out). It catalyses the reaction glycine(out) + n H(+)(in) = glycine(in) + n H(+)(out). The enzyme catalyses beta-alanine(out) + n H(+)(in) = beta-alanine(in) + n H(+)(out). In terms of biological role, antiporter that exchanges vesicular protons for cytosolic 4-aminobutanoate or to a lesser extend glycine, thus allowing their secretion from nerve terminals. The transport is equally dependent on the chemical and electrical components of the proton gradient. May also transport beta-alanine. Acidification of GABAergic synaptic vesicles is a prerequisite for 4-aminobutanoate uptake. This is Vesicular inhibitory amino acid transporter from Xenopus laevis (African clawed frog).